We begin with the raw amino-acid sequence, 716 residues long: Polyribonucleotide nucleotidyltransferase (716 aa).

Residues D490 and D496 each contribute to the Mg(2+) site. Positions P556–I615 constitute a KH domain. Residues G625–K693 form the S1 motif domain. Positions V695–A716 are disordered. Residues Q704–A716 show a composition bias toward basic and acidic residues.

This sequence belongs to the polyribonucleotide nucleotidyltransferase family. Mg(2+) is required as a cofactor.

It localises to the cytoplasm. The enzyme catalyses RNA(n+1) + phosphate = RNA(n) + a ribonucleoside 5'-diphosphate. Functionally, involved in mRNA degradation. Catalyzes the phosphorolysis of single-stranded polyribonucleotides processively in the 3'- to 5'-direction. In Cereibacter sphaeroides (strain ATCC 17029 / ATH 2.4.9) (Rhodobacter sphaeroides), this protein is Polyribonucleotide nucleotidyltransferase.